The primary structure comprises 1338 residues: Phosphoribosylformylglycinamidine synthase (1338 aa).

Serine 215 is modified (phosphoserine). Residues 322 to 333 (GATTGTGGRIRD) and 402 to 404 (AGF) each bind ATP. Phosphoserine is present on serine 569. 2 positions are modified to phosphothreonine: threonine 619 and threonine 623. Alanine 706 provides a ligand contact to ATP. Mg(2+) is bound by residues aspartate 707, glutamate 746, asparagine 750, and aspartate 909. Serine 911 serves as a coordination point for ATP. In terms of domain architecture, Glutamine amidotransferase type-1 spans 1064-1302 (RVAILREEGS…AVMPHPERAV (239 aa)). Cysteine 1158 serves as the catalytic Nucleophile. Residues histidine 1297 and glutamate 1299 contribute to the active site.

In the N-terminal section; belongs to the FGAMS family.

It localises to the cytoplasm. It carries out the reaction N(2)-formyl-N(1)-(5-phospho-beta-D-ribosyl)glycinamide + L-glutamine + ATP + H2O = 2-formamido-N(1)-(5-O-phospho-beta-D-ribosyl)acetamidine + L-glutamate + ADP + phosphate + H(+). The protein operates within purine metabolism; IMP biosynthesis via de novo pathway; 5-amino-1-(5-phospho-D-ribosyl)imidazole from N(2)-formyl-N(1)-(5-phospho-D-ribosyl)glycinamide: step 1/2. Functionally, phosphoribosylformylglycinamidine synthase involved in the purines biosynthetic pathway. Catalyzes the ATP-dependent conversion of formylglycinamide ribonucleotide (FGAR) and glutamine to yield formylglycinamidine ribonucleotide (FGAM) and glutamate. The chain is Phosphoribosylformylglycinamidine synthase (PFAS) from Homo sapiens (Human).